Consider the following 530-residue polypeptide: NAD(+) kinase (530 aa).

Disordered stretches follow at residues 1 to 27 (MKEN…HNNN), 57 to 99 (ISSE…KSSN), and 486 to 530 (SLEA…RFSV). The segment covering 13-25 (WVNEEDGRNDHHN) has biased composition (basic and acidic residues). Residues 59–75 (SESSSRRSSLLNKDSSL) show a composition bias toward low complexity. Positions 88 to 99 (INGTRGSSKSSN) are enriched in polar residues. Phosphoserine occurs at positions 499 and 503. Residues 499-508 (SDDESDDESV) show a composition bias toward acidic residues.

Belongs to the NAD kinase family. Homohexamer.

The enzyme catalyses NAD(+) + ATP = ADP + NADP(+) + H(+). Functionally, specifically phosphorylates NAD in the presence of ATP, dATP, or CTP as phosphoryl donors. The polypeptide is NAD(+) kinase (UTR1) (Saccharomyces cerevisiae (strain ATCC 204508 / S288c) (Baker's yeast)).